The following is a 51-amino-acid chain: Insulin (51 aa).

3 cysteine pairs are disulfide-bonded: Cys7-Cys37, Cys19-Cys50, and Cys36-Cys41.

Belongs to the insulin family. As to quaternary structure, heterodimer of a B chain and an A chain linked by two disulfide bonds.

Its subcellular location is the secreted. Its function is as follows. Insulin decreases blood glucose concentration. It increases cell permeability to monosaccharides, amino acids and fatty acids. It accelerates glycolysis, the pentose phosphate cycle, and glycogen synthesis in liver. In Ptyas dhumnades (Big-eyed ratsnake), this protein is Insulin (INS).